The sequence spans 255 residues: 4-diphosphocytidyl-2-C-methyl-D-erythritol kinase (255 aa).

K9 is a catalytic residue. 95–105 contributes to the ATP binding site; it reads PSQAGLGGGSS. D137 is a catalytic residue.

This sequence belongs to the GHMP kinase family. IspE subfamily.

The catalysed reaction is 4-CDP-2-C-methyl-D-erythritol + ATP = 4-CDP-2-C-methyl-D-erythritol 2-phosphate + ADP + H(+). It participates in isoprenoid biosynthesis; isopentenyl diphosphate biosynthesis via DXP pathway; isopentenyl diphosphate from 1-deoxy-D-xylulose 5-phosphate: step 3/6. Its function is as follows. Catalyzes the phosphorylation of the position 2 hydroxy group of 4-diphosphocytidyl-2C-methyl-D-erythritol. The chain is 4-diphosphocytidyl-2-C-methyl-D-erythritol kinase from Sulfurovum sp. (strain NBC37-1).